A 333-amino-acid chain; its full sequence is Transaldolase (333 aa).

K135 functions as the Schiff-base intermediate with substrate in the catalytic mechanism.

Belongs to the transaldolase family. Type 1 subfamily. Homodimer.

The protein resides in the cytoplasm. It carries out the reaction D-sedoheptulose 7-phosphate + D-glyceraldehyde 3-phosphate = D-erythrose 4-phosphate + beta-D-fructose 6-phosphate. It participates in carbohydrate degradation; pentose phosphate pathway; D-glyceraldehyde 3-phosphate and beta-D-fructose 6-phosphate from D-ribose 5-phosphate and D-xylulose 5-phosphate (non-oxidative stage): step 2/3. Its function is as follows. Transaldolase is important for the balance of metabolites in the pentose-phosphate pathway. In Prochlorococcus marinus (strain MIT 9312), this protein is Transaldolase.